Consider the following 1709-residue polypeptide: Protein SHORTAGE IN CHIASMATA 1 homolog (1709 aa).

3 stretches are compositionally biased toward basic and acidic residues: residues 532 to 542, 552 to 568, and 1601 to 1613; these read PKLQDEDKHSD, DPQK…EGGT, and ESFR…DTPS. Disordered stretches follow at residues 532-586 and 1566-1662; these read PKLQ…SSFP and KRKA…DPTW.

The protein belongs to the XPF family. Interacts (via C-terminus) with PTD. Interacts with ZIP4. As to expression, highly expressed in anthers and pistil during meiosis. Expressed in pollen mother cells (PMCs) during meiosis. Expressed at low levels in roots, shoots, leaves, flowers, and glumes.

Its subcellular location is the chromosome. It is found in the nucleus. The protein localises to the cytoplasm. The protein resides in the cell membrane. Functionally, essential for normal crossover (CO) formation during meiosis. Essential component for the formation of class I meiotic COs. Interacts with PTD, another meiotic component, to regulate CO formation, possibly by stabilizing the recombination intermediates during meiosis. SHOC1 and PTD may form transient heterotrimeric or heterotetrameric complexes with HEI10 and/or ZIP4 to promote class I COs formation. Does not seem to be involved in early meiotic recombination steps involving double-strand break (DSB) formation, processing, and single-strand invasion. Does not seem to be involved in homologous pairing or synaptonemal complex (SC) assembly. The chain is Protein SHORTAGE IN CHIASMATA 1 homolog from Oryza sativa subsp. japonica (Rice).